The primary structure comprises 215 residues: ATP-dependent Clp protease proteolytic subunit 3 (215 aa).

The active-site Nucleophile is Ser-119. Residue His-144 is part of the active site.

Belongs to the peptidase S14 family. Fourteen ClpP subunits assemble into 2 heptameric rings which stack back to back to give a disk-like structure with a central cavity, resembling the structure of eukaryotic proteasomes.

The protein localises to the cytoplasm. The enzyme catalyses Hydrolysis of proteins to small peptides in the presence of ATP and magnesium. alpha-casein is the usual test substrate. In the absence of ATP, only oligopeptides shorter than five residues are hydrolyzed (such as succinyl-Leu-Tyr-|-NHMec, and Leu-Tyr-Leu-|-Tyr-Trp, in which cleavage of the -Tyr-|-Leu- and -Tyr-|-Trp bonds also occurs).. In terms of biological role, cleaves peptides in various proteins in a process that requires ATP hydrolysis. Has a chymotrypsin-like activity. Plays a major role in the degradation of misfolded proteins. This chain is ATP-dependent Clp protease proteolytic subunit 3, found in Prochlorococcus marinus subsp. pastoris (strain CCMP1986 / NIES-2087 / MED4).